Here is a 143-residue protein sequence, read N- to C-terminus: Nucleoside diphosphate kinase (143 aa).

Positions 11, 59, 87, 93, 104, and 114 each coordinate ATP. Histidine 117 functions as the Pros-phosphohistidine intermediate in the catalytic mechanism.

This sequence belongs to the NDK family. As to quaternary structure, homotetramer. Mg(2+) serves as cofactor.

The protein localises to the cytoplasm. The enzyme catalyses a 2'-deoxyribonucleoside 5'-diphosphate + ATP = a 2'-deoxyribonucleoside 5'-triphosphate + ADP. It catalyses the reaction a ribonucleoside 5'-diphosphate + ATP = a ribonucleoside 5'-triphosphate + ADP. Its function is as follows. Major role in the synthesis of nucleoside triphosphates other than ATP. The ATP gamma phosphate is transferred to the NDP beta phosphate via a ping-pong mechanism, using a phosphorylated active-site intermediate. The protein is Nucleoside diphosphate kinase of Salmonella agona (strain SL483).